A 371-amino-acid polypeptide reads, in one-letter code: MTRPKTFFDISIGGKPQGRIVFELYNDIVPKTAENFLKLCEGNAGMAKTKPDVPLSYKGSIFHRVIKDFMCQFGDFTNFNGTGGESIYDEKFEDENFTVKHDKPFLLSMANAGPNTNGSQAFITCVPTPHLDGKHVVFGEVIQGKRIVRLIENQQCDQENNKPLRDVKIDDCGVLPDDYQVPENAEATPTDEYGDNYEDVLKQDEKVDLKNFDTVLKAIETVKNIGTEQFKKQNYSVALEKYVKCDKFLKEYFPEDLEKEQIEKINQLKVSIPLNIAICALKLKDYKQVLVASSEVLYAEAADEKAKAKALYRRGLAYYHVNDTDMALNDLEMATTFQPNDAAILKAIHNTKLKRKQQNEKAKKSLSKMFS.

The region spanning 7-174 is the PPIase cyclophilin-type domain; sequence FFDISIGGKP…RDVKIDDCGV (168 aa). 3 TPR repeats span residues 219–252, 270–303, and 308–341; these read IETV…LKEY, VSIP…EAAD, and AKAL…QPND.

This sequence belongs to the cyclophilin-type PPIase family. PPIase D subfamily. Interacts with RPD3.

The protein resides in the cytoplasm. The catalysed reaction is [protein]-peptidylproline (omega=180) = [protein]-peptidylproline (omega=0). Its function is as follows. PPIases accelerate the folding of proteins. It catalyzes the cis-trans isomerization of proline imidic peptide bonds in oligopeptides. The sequence is that of Peptidyl-prolyl cis-trans isomerase CPR6 (CPR6) from Saccharomyces cerevisiae (strain ATCC 204508 / S288c) (Baker's yeast).